The primary structure comprises 472 residues: Spliceosome-associated protein CWC27 homolog (472 aa).

Residue serine 2 is modified to N-acetylserine. Positions 11–166 (TNGKVLLKTT…NPHKIKSCEV (156 aa)) constitute a PPIase cyclophilin-type domain. N-linked (GlcNAc...) asparagine glycans are attached at residues asparagine 109 and asparagine 201. The stretch at 206–230 (SFGEEAEEEEEEVNRVSQSMKGKSK) forms a coiled coil. Disordered regions lie at residues 206–386 (SFGE…DQTL) and 398–472 (QAIA…KERR). Positions 231–241 (SSHDLLKDDPH) are enriched in basic and acidic residues. Over residues 257–268 (DLVDDGEDESAE) the composition is skewed to acidic residues. Composition is skewed to basic and acidic residues over residues 269–286 (HDEYIDGDEKNLMRERIA), 304–347 (EVEK…KRSE), and 359–371 (EYRREKQKYEALR). Positions 306-377 (EKKSVSRSEE…EALRKQQSKK (72 aa)) form a coiled coil. Serine 346 carries the post-translational modification Phosphoserine. Positions 404-418 (PENDIPETEVEDDEG) are enriched in acidic residues. Basic and acidic residues-rich tracts occupy residues 425 to 437 (QFEDKSRKVKDAS) and 457 to 472 (RREESKKLMREKKERR).

It belongs to the cyclophilin-type PPIase family. As to quaternary structure, part of the activated spliceosome B/catalytic step 1 spliceosome, one of the forms of the spliceosome which has a well-formed active site but still cannot catalyze the branching reaction and is composed at least of 52 proteins, the U2, U5 and U6 snRNAs and the pre-mRNA. Recruited during early steps of activated spliceosome B maturation, it is probably one of the first proteins released from this complex as he matures to the spliceosome C complex. Component of the minor spliceosome, which splices U12-type introns.

Its subcellular location is the nucleus. In terms of biological role, as part of the spliceosome, plays a role in pre-mRNA splicing. Probable inactive PPIase with no peptidyl-prolyl cis-trans isomerase activity. As a component of the minor spliceosome, involved in the splicing of U12-type introns in pre-mRNAs. This Homo sapiens (Human) protein is Spliceosome-associated protein CWC27 homolog.